Reading from the N-terminus, the 119-residue chain is Tubulin-specific chaperone A (119 aa).

This sequence belongs to the TBCA family. In terms of assembly, supercomplex made of cofactors A to E. Cofactors A and D function by capturing and stabilizing tubulin in a quasi-native conformation. Cofactor E binds to the cofactor D-tubulin complex; interaction with cofactor C then causes the release of tubulin polypeptides that are committed to the native state.

The protein localises to the cytoplasm. It is found in the cytoskeleton. Required for the maintenance of microtubule structures and cell polarity. Beta-tubulin-folding protein; may have a regulatory role in the tubulin-folding pathway. The sequence is that of Tubulin-specific chaperone A (alp31) from Schizosaccharomyces pombe (strain 972 / ATCC 24843) (Fission yeast).